The sequence spans 256 residues: Type III pantothenate kinase (256 aa).

Residue 6–13 (DIGNSSIV) participates in ATP binding. Substrate is bound by residues Y101 and 108–111 (GADR). The active-site Proton acceptor is D110. D130 serves as a coordination point for K(+). T133 contacts ATP. A substrate-binding site is contributed by T185.

The protein belongs to the type III pantothenate kinase family. Homodimer. It depends on NH4(+) as a cofactor. K(+) is required as a cofactor.

Its subcellular location is the cytoplasm. It carries out the reaction (R)-pantothenate + ATP = (R)-4'-phosphopantothenate + ADP + H(+). The protein operates within cofactor biosynthesis; coenzyme A biosynthesis; CoA from (R)-pantothenate: step 1/5. Functionally, catalyzes the phosphorylation of pantothenate (Pan), the first step in CoA biosynthesis. The protein is Type III pantothenate kinase of Shouchella clausii (strain KSM-K16) (Alkalihalobacillus clausii).